The following is a 139-amino-acid chain: Transcription initiation factor IIA small chain homolog (139 aa).

Residues 113–139 (LSAQGPSKRVNRAHAAAAGDDEDDDSD) form a disordered region.

The protein belongs to the TFIIA subunit 2 family.

It is found in the nucleus. The sequence is that of Transcription initiation factor IIA small chain homolog from Caenorhabditis elegans.